A 435-amino-acid polypeptide reads, in one-letter code: Serine--tRNA ligase (435 aa).

Position 242–244 (242–244) interacts with L-serine; sequence TAE. ATP is bound at residue 273-275; that stretch reads RSE. E296 provides a ligand contact to L-serine. Position 360–363 (360–363) interacts with ATP; sequence EISS. S396 provides a ligand contact to L-serine.

The protein belongs to the class-II aminoacyl-tRNA synthetase family. Type-1 seryl-tRNA synthetase subfamily. In terms of assembly, homodimer. The tRNA molecule binds across the dimer.

Its subcellular location is the cytoplasm. The enzyme catalyses tRNA(Ser) + L-serine + ATP = L-seryl-tRNA(Ser) + AMP + diphosphate + H(+). It carries out the reaction tRNA(Sec) + L-serine + ATP = L-seryl-tRNA(Sec) + AMP + diphosphate + H(+). The protein operates within aminoacyl-tRNA biosynthesis; selenocysteinyl-tRNA(Sec) biosynthesis; L-seryl-tRNA(Sec) from L-serine and tRNA(Sec): step 1/1. Its function is as follows. Catalyzes the attachment of serine to tRNA(Ser). Is also able to aminoacylate tRNA(Sec) with serine, to form the misacylated tRNA L-seryl-tRNA(Sec), which will be further converted into selenocysteinyl-tRNA(Sec). This chain is Serine--tRNA ligase, found in Vibrio vulnificus (strain YJ016).